A 378-amino-acid polypeptide reads, in one-letter code: Glutamate 5-kinase (378 aa).

Residue lysine 14 participates in ATP binding. Positions 54, 141, and 153 each coordinate substrate. 173 to 174 contributes to the ATP binding site; that stretch reads SD. Residues 279–356 form the PUA domain; it reads AGRLTVDAGA…DEISAILGYD (78 aa).

Belongs to the glutamate 5-kinase family.

It is found in the cytoplasm. It catalyses the reaction L-glutamate + ATP = L-glutamyl 5-phosphate + ADP. The protein operates within amino-acid biosynthesis; L-proline biosynthesis; L-glutamate 5-semialdehyde from L-glutamate: step 1/2. Functionally, catalyzes the transfer of a phosphate group to glutamate to form L-glutamate 5-phosphate. The sequence is that of Glutamate 5-kinase from Brucella canis (strain ATCC 23365 / NCTC 10854 / RM-666).